The chain runs to 282 residues: Bifunctional protein FolD (282 aa).

NADP(+) is bound by residues 164-166 (GAS), I189, and I230.

Belongs to the tetrahydrofolate dehydrogenase/cyclohydrolase family. Homodimer.

The catalysed reaction is (6R)-5,10-methylene-5,6,7,8-tetrahydrofolate + NADP(+) = (6R)-5,10-methenyltetrahydrofolate + NADPH. The enzyme catalyses (6R)-5,10-methenyltetrahydrofolate + H2O = (6R)-10-formyltetrahydrofolate + H(+). Its pathway is one-carbon metabolism; tetrahydrofolate interconversion. Functionally, catalyzes the oxidation of 5,10-methylenetetrahydrofolate to 5,10-methenyltetrahydrofolate and then the hydrolysis of 5,10-methenyltetrahydrofolate to 10-formyltetrahydrofolate. The polypeptide is Bifunctional protein FolD (Campylobacter jejuni (strain RM1221)).